Here is a 726-residue protein sequence, read N- to C-terminus: Methionine--tRNA ligase (726 aa).

The 'HIGH' region signature appears at 12 to 22 (PYVNNIPHLGN). Positions 143, 146, 155, and 158 each coordinate Zn(2+). The 'KMSKS' region signature appears at 330–334 (KFSKS). K333 serves as a coordination point for ATP. One can recognise a tRNA-binding domain in the interval 562–667 (FSEQICLKTV…DNPIPGERVI (106 aa)).

Belongs to the class-I aminoacyl-tRNA synthetase family. MetG type 1 subfamily. Homodimer. It depends on Zn(2+) as a cofactor.

The protein resides in the cytoplasm. It carries out the reaction tRNA(Met) + L-methionine + ATP = L-methionyl-tRNA(Met) + AMP + diphosphate. Is required not only for elongation of protein synthesis but also for the initiation of all mRNA translation through initiator tRNA(fMet) aminoacylation. This chain is Methionine--tRNA ligase, found in Borrelia duttonii (strain Ly).